We begin with the raw amino-acid sequence, 242 residues long: tRNA pseudouridine synthase A (242 aa).

The active-site Nucleophile is the Asp51. Tyr107 serves as a coordination point for substrate.

It belongs to the tRNA pseudouridine synthase TruA family. As to quaternary structure, homodimer.

It catalyses the reaction uridine(38/39/40) in tRNA = pseudouridine(38/39/40) in tRNA. Formation of pseudouridine at positions 38, 39 and 40 in the anticodon stem and loop of transfer RNAs. This chain is tRNA pseudouridine synthase A, found in Helicobacter pylori (strain J99 / ATCC 700824) (Campylobacter pylori J99).